A 297-amino-acid chain; its full sequence is NAD(P)-dependent methylenetetrahydromethanopterin dehydrogenase (297 aa).

This sequence to M.extorquens MtdA. Homohexamer.

Its subcellular location is the cytoplasm. It catalyses the reaction 5,10-methylenetetrahydromethanopterin + NAD(+) = 5,10-methenyl-5,6,7,8-tetrahydromethanopterin + NADH. It carries out the reaction 5,10-methylenetetrahydromethanopterin + NADP(+) = 5,10-methenyl-5,6,7,8-tetrahydromethanopterin + NADPH. The protein operates within one-carbon metabolism; formaldehyde degradation; formate from formaldehyde (H(4)MPT route): step 2/5. In terms of biological role, catalyzes the dehydrogenation of methylene-H(4)MPT. The sequence is that of NAD(P)-dependent methylenetetrahydromethanopterin dehydrogenase (mtdB) from Methylorubrum extorquens (strain ATCC 14718 / DSM 1338 / JCM 2805 / NCIMB 9133 / AM1) (Methylobacterium extorquens).